The chain runs to 280 residues: UDP-3-O-acyl-N-acetylglucosamine deacetylase (280 aa).

Residues histidine 77, histidine 238, and aspartate 242 each contribute to the Zn(2+) site. Catalysis depends on histidine 265, which acts as the Proton donor.

This sequence belongs to the LpxC family. Zn(2+) serves as cofactor.

It carries out the reaction a UDP-3-O-[(3R)-3-hydroxyacyl]-N-acetyl-alpha-D-glucosamine + H2O = a UDP-3-O-[(3R)-3-hydroxyacyl]-alpha-D-glucosamine + acetate. It functions in the pathway glycolipid biosynthesis; lipid IV(A) biosynthesis; lipid IV(A) from (3R)-3-hydroxytetradecanoyl-[acyl-carrier-protein] and UDP-N-acetyl-alpha-D-glucosamine: step 2/6. In terms of biological role, catalyzes the hydrolysis of UDP-3-O-myristoyl-N-acetylglucosamine to form UDP-3-O-myristoylglucosamine and acetate, the committed step in lipid A biosynthesis. The sequence is that of UDP-3-O-acyl-N-acetylglucosamine deacetylase from Nostoc sp. (strain PCC 7120 / SAG 25.82 / UTEX 2576).